A 112-amino-acid chain; its full sequence is NADH-quinone oxidoreductase subunit K (112 aa).

Transmembrane regions (helical) follow at residues 14–34 (LEGY…GALI), 39–59 (VVVF…LVAF), and 76–96 (LIIA…LAIF).

This sequence belongs to the complex I subunit 4L family. In terms of assembly, NDH-1 is composed of 14 different subunits. Subunits NuoA, H, J, K, L, M, N constitute the membrane sector of the complex.

It localises to the cell membrane. It carries out the reaction a quinone + NADH + 5 H(+)(in) = a quinol + NAD(+) + 4 H(+)(out). Its function is as follows. NDH-1 shuttles electrons from NADH, via FMN and iron-sulfur (Fe-S) centers, to quinones in the respiratory chain. The immediate electron acceptor for the enzyme in this species is believed to be a menaquinone. Couples the redox reaction to proton translocation (for every two electrons transferred, four hydrogen ions are translocated across the cytoplasmic membrane), and thus conserves the redox energy in a proton gradient. The polypeptide is NADH-quinone oxidoreductase subunit K (Rubrobacter xylanophilus (strain DSM 9941 / JCM 11954 / NBRC 16129 / PRD-1)).